The primary structure comprises 287 residues: Protein HEXIM2 (287 aa).

Disordered stretches follow at residues 1-212 (MKDW…RSKE) and 266-287 (RLRQ…QPGS). A Phosphoserine modification is found at S31. Phosphothreonine is present on residues T34 and T48. A phosphoserine mark is found at S53, S55, S73, S78, and S83. Residues 89 to 105 (ARKKHRRRPSKRKRHWR) show a composition bias toward basic residues. Over residues 115–134 (KQQRDERQSQRASRVREEMF) the composition is skewed to basic and acidic residues. The segment at 142–145 (PYNT) is interaction with P-TEFb. Composition is skewed to basic and acidic residues over residues 181–212 (GQGR…RSKE) and 266–280 (RLRQ…EGGR). Residues 208-278 (GRSKEELVRD…QENEMWNREG (71 aa)) adopt a coiled-coil conformation. Residues 227 to 287 (QAEEEMRRLR…GGRRGGQPGS (61 aa)) form an interaction with CCNT1, HEXIM1 and HEXIM2 region.

The protein belongs to the HEXIM family. As to quaternary structure, homooligomer and heterooligomer with HEXIM1; probably dimeric. Core component of the 7SK RNP complex, at least composed of 7SK RNA, LARP7, MEPCE, HEXIM1 (or HEXIM2) and P-TEFb (composed of CDK9 and CCNT1/cyclin-T1). Interacts with CCNT2.

It localises to the nucleus. Transcriptional regulator which functions as a general RNA polymerase II transcription inhibitor. Core component of the 7SK RNP complex: in cooperation with 7SK snRNA sequesters P-TEFb in a large inactive 7SK snRNP complex preventing RNA polymerase II phosphorylation and subsequent transcriptional elongation. The polypeptide is Protein HEXIM2 (HEXIM2) (Bos taurus (Bovine)).